The chain runs to 161 residues: Calmodulin-like protein (161 aa).

4 EF-hand domains span residues 21 to 56 (EEID…LGQN), 57 to 92 (PTEQ…MMKE), 93 to 128 (TDSE…MGMQ), and 129 to 161 (FSEE…MSNQ). Residues Asp34, Asp36, Asn38, Thr40, Glu45, Asp70, Asp72, Asn74, Gln76, Glu81, Asp106, Asp108, Asn110, Glu117, Asp142, Asp144, Asp146, Glu148, and Glu153 each contribute to the Ca(2+) site.

It belongs to the calmodulin family.

This protein resembles calmodulin in sequence but possibly resembles troponin C in function. In Caenorhabditis elegans, this protein is Calmodulin-like protein (cal-1).